A 217-amino-acid chain; its full sequence is Adenylate kinase (217 aa).

10-15 (GIGKGT) provides a ligand contact to ATP. The NMP stretch occupies residues 30–59 (ATGDIFRKNFKENTELGILIKKIIAQGLLV). Residues threonine 31, arginine 36, 57–59 (LLV), 85–88 (GFPR), and glutamine 92 contribute to the AMP site. The tract at residues 126-163 (GRRICPECGKVYHIENIPPKTPGICDKDQKTLIQREDD) is LID. Position 127 (arginine 127) interacts with ATP. Residues cysteine 130 and cysteine 133 each coordinate Zn(2+). 136–137 (VY) is a binding site for ATP. 2 residues coordinate Zn(2+): cysteine 150 and aspartate 153. AMP-binding residues include arginine 160 and arginine 171. ATP is bound at residue glutamine 199.

Belongs to the adenylate kinase family. In terms of assembly, monomer.

The protein localises to the cytoplasm. It catalyses the reaction AMP + ATP = 2 ADP. Its pathway is purine metabolism; AMP biosynthesis via salvage pathway; AMP from ADP: step 1/1. Its function is as follows. Catalyzes the reversible transfer of the terminal phosphate group between ATP and AMP. Plays an important role in cellular energy homeostasis and in adenine nucleotide metabolism. This chain is Adenylate kinase, found in Onion yellows phytoplasma (strain OY-M).